We begin with the raw amino-acid sequence, 57 residues long: uncharacterized protein (57 aa).

The segment at 31-57 (HHQTSSFNPMPSEVSLHTSHNFPHTTF) is disordered. Residues 33–57 (QTSSFNPMPSEVSLHTSHNFPHTTF) show a composition bias toward polar residues.

This is an uncharacterized protein from Invertebrate iridescent virus 6 (IIV-6).